The following is a 390-amino-acid chain: Spore development regulator vosA (390 aa).

The 130-residue stretch at N3 to R132 folds into the Velvet domain. A compositionally biased stretch (basic and acidic residues) spans T137–H149. Disordered regions lie at residues T137 to R191 and Q265 to Q390. The span at P165–P175 shows a compositional bias: low complexity. The Nuclear localization signal motif lies at I273–S280. Composition is skewed to polar residues over residues Q350–V364 and S371–Q390.

It belongs to the velvet family. VosA subfamily. In terms of assembly, forms a heterodimeric complex with velB; the formation of the velB-vosA complex is light-dependent. Interacts with velA, velB and velC.

Its subcellular location is the nucleus. In terms of biological role, component of the velB-VosA heterodimeric complex that plays a dual role in activating genes associated with spore maturation and repressing certain development-associated genes. The complex binds DNA through the DNA-binding domain of vosA that recognizes an 11-nucleotide consensus sequence 5'-CTGGCCGCGGC-3' consisting of two motifs in the promoters of key developmental regulatory genes. The protein is Spore development regulator vosA of Penicillium rubens (strain ATCC 28089 / DSM 1075 / NRRL 1951 / Wisconsin 54-1255) (Penicillium chrysogenum).